The primary structure comprises 655 residues: D-xylonate dehydratase YagF (655 aa).

Belongs to the IlvD/Edd family.

The enzyme catalyses D-xylonate = 2-dehydro-3-deoxy-D-arabinonate + H2O. In terms of biological role, catalyzes the dehydration of D-xylonic acid to form 2-dehydro-3-deoxy-D-pentonate. The sequence is that of D-xylonate dehydratase YagF (yagF) from Escherichia coli (strain K12).